Here is a 348-residue protein sequence, read N- to C-terminus: 3-isopropylmalate dehydrogenase (348 aa).

Position 76–87 (76–87 (GPKWTDPNNRPE)) interacts with NAD(+). Substrate is bound by residues arginine 94, arginine 104, arginine 132, and aspartate 217. 3 residues coordinate Mg(2+): aspartate 217, aspartate 241, and aspartate 245. Residue 275–287 (GSAPDIAGKNVAN) coordinates NAD(+).

This sequence belongs to the isocitrate and isopropylmalate dehydrogenases family. LeuB type 1 subfamily. Homodimer. Mg(2+) is required as a cofactor. The cofactor is Mn(2+).

The protein resides in the cytoplasm. The catalysed reaction is (2R,3S)-3-isopropylmalate + NAD(+) = 4-methyl-2-oxopentanoate + CO2 + NADH. Its pathway is amino-acid biosynthesis; L-leucine biosynthesis; L-leucine from 3-methyl-2-oxobutanoate: step 3/4. In terms of biological role, catalyzes the oxidation of 3-carboxy-2-hydroxy-4-methylpentanoate (3-isopropylmalate) to 3-carboxy-4-methyl-2-oxopentanoate. The product decarboxylates to 4-methyl-2 oxopentanoate. This is 3-isopropylmalate dehydrogenase from Staphylococcus aureus (strain NCTC 8325 / PS 47).